The chain runs to 139 residues: Mitochondrial intermembrane space import and assembly protein 40 (139 aa).

3 cysteine pairs are disulfide-bonded: cysteine 53/cysteine 55, cysteine 64/cysteine 97, and cysteine 74/cysteine 87. The CHCH domain occupies 61–105 (SGPCGEQFKSAFSCFHYSTEDIKGSDCIDQFRAMQECMQKYPDLY). 2 consecutive short sequence motifs (cx9C motif) follow at residues 64–74 (CGEQFKSAFSC) and 87–97 (CIDQFRAMQEC). The disordered stretch occupies residues 104–139 (LYPQDEEEEEEAKPVEPVEETADTKASAAKEQGASS). The segment covering 106–124 (PQDEEEEEEAKPVEPVEET) has biased composition (acidic residues).

As to quaternary structure, monomer. Can form homooligomers. Interacts with GFER and forms transient disulfide bonds with GFER. Interacts with MICU1. Interacts with COX19 forming transient intermolecular disulfide bridges. Interacts with COA7 through transient intermolecular disulfide bonds. Interacts with AIFM1; the interaction increases in presence of NADH. Interacts with NDUFB10. Forms intrachain disulfide bridges, but exists in different redox states.

It is found in the mitochondrion intermembrane space. Functionally, central component of a redox-sensitive mitochondrial intermembrane space import machinery which is required for the biogenesis of respiratory chain complexes. Functions as a chaperone and catalyzes the formation of disulfide bonds in substrate proteins, such as COX17, COX19, MICU1 and COA7. Required for the import and folding of small cysteine-containing proteins (small Tim) in the mitochondrial intermembrane space (IMS). Required for the import of COA7 in the IMS. Precursor proteins to be imported into the IMS are translocated in their reduced form into the mitochondria. The oxidized form of CHCHD4/MIA40 forms a transient intermolecular disulfide bridge with the reduced precursor protein, resulting in oxidation of the precursor protein that now contains an intramolecular disulfide bond and is able to undergo folding in the IMS. Reduced CHCHD4/MIA40 is then reoxidized by GFER/ERV1 via a disulfide relay system. Mediates formation of disulfide bond in MICU1 in the IMS, promoting formation of the MICU1-MICU2 heterodimer that regulates mitochondrial calcium uptake. The protein is Mitochondrial intermembrane space import and assembly protein 40 (Chchd4) of Rattus norvegicus (Rat).